The chain runs to 237 residues: Pyrimidine 5'-nucleotidase PynA (237 aa).

The Nucleophile role is filled by aspartate 9. 3 residues coordinate Mg(2+): aspartate 9, aspartate 11, and aspartate 181. Catalysis depends on aspartate 11, which acts as the Proton donor.

Belongs to the HAD-like hydrolase superfamily. YjjG family. As to quaternary structure, homodimer. Requires Mg(2+) as cofactor. Mn(2+) is required as a cofactor.

Its subcellular location is the cytoplasm. The catalysed reaction is a ribonucleoside 5'-phosphate + H2O = a ribonucleoside + phosphate. Its function is as follows. Nucleotidase that shows high phosphatase activity toward non-canonical pyrimidine nucleotides and three canonical nucleoside 5'-monophosphates (UMP, dUMP and dTMP), and no activity against IMP, UDP, GMP, AMP, UTP or pNPP. Appears to function as a house-cleaning nucleotidase in vivo, since the general nucleotidase activity of it allows it to protect cells against non-canonical pyrimidine derivatives such as 5-fluoro-2'-deoxyuridine monophosphate (5-FdUMP), and prevents the incorporation of potentially mutagenic nucleotides such as 5-bromo-2'-deoxyuridine (5-BrdU) into DNA. Is strictly specific to pyrimidine substrates with 5'-monophosphates and shows no activity against nucleoside di- and triphosphates. In Streptococcus pneumoniae (strain ATCC BAA-255 / R6), this protein is Pyrimidine 5'-nucleotidase PynA.